Reading from the N-terminus, the 56-residue chain is Conotoxin Cal6.41a (56 aa).

The first 23 residues, 1–23 (MSGSGAMLLGLLILVAMATSLDT), serve as a signal peptide directing secretion. Intrachain disulfides connect Cys27-Cys41, Cys33-Cys50, and Cys40-Cys54.

As to expression, expressed by the venom duct.

Its subcellular location is the secreted. Its function is as follows. Probable neurotoxin. The polypeptide is Conotoxin Cal6.41a (Californiconus californicus (California cone)).